Here is a 157-residue protein sequence, read N- to C-terminus: MCSIWLTFFLSFLILNTKAEQVYQTCADESFEPNDYWKQKMLCMAYRFNFYGYKSNSMYAFMDCTFIRVGWMDKGTRKWNVAKMAADMHASGFPDRTAELTEIEAMCNMEFRNKLGPMSYYRCIETSKQGPGEFKQMLRNREVEFFSKNQCQGVDLD.

Positions 1 to 19 are cleaved as a signal peptide; it reads MCSIWLTFFLSFLILNTKA.

Belongs to the PBP/GOBP family. As to quaternary structure, interacts with mouse TLR1; the interaction promotes activation of canonical NF-kappa-B signaling in host macrophages. Interacts with human TLR1. Interacts with mouse TLR4; the interaction promotes activation of canonical NF-kappa-B signaling in host macrophages. Interacts with human TLR4. Female salivary gland (at protein level).

It localises to the secreted. Its function is as follows. Activates MyD88-dependent canonical NF-kappa-B signaling in host macrophages via interaction with host TLR1 and TLR4; this drives the expression of neutrophil chemoattractants, followed by the subsequent influx of neutrophils and recruitment of myeloid cells at the bite site. Functionally, (Microbial infection) Promotes Zika virus infection in mouse model by facilitating recruitment of flavivirus-permissive myeloid cells at the bite site. (Microbial infection) Promotes dengue virus infection in mouse model by facilitating recruitment of flavivirus-permissive myeloid cells at the bite site. The polypeptide is Neutrophil recruitment protein (Aedes aegypti (Yellowfever mosquito)).